Here is a 461-residue protein sequence, read N- to C-terminus: CASP-like protein 4U1 (461 aa).

Residues 1–239 (MASTPRTPAP…RAAETKLPLS (239 aa)) form a disordered region. The Cytoplasmic portion of the chain corresponds to 1 to 314 (MASTPRTPAP…AAVAVGERRE (314 aa)). A compositionally biased stretch (pro residues) spans 7–69 (TPAPVRSPPP…PLETPPPPSP (63 aa)). Composition is skewed to low complexity over residues 116-126 (LSPMRLAAPRL) and 135-155 (TPTG…AAAG). A compositionally biased stretch (pro residues) spans 193-204 (SPSPSPTPPSPL). Positions 205-221 (TPAAAPVVNNNSNNKNN) are enriched in low complexity. A helical transmembrane segment spans residues 315–335 (LSVTLRLATAVLSLAAFSVIA). Residues 336 to 354 (SARTSGWAGDYYAHHLQYR) lie on the Extracellular side of the membrane. Residues 355–375 (YAVAVNVIVCAYSIAQSFGEI) traverse the membrane as a helical segment. Over 376–392 (RRLISPRFIFRSMSSYY) the chain is Cytoplasmic. The chain crosses the membrane as a helical span at residues 393–413 (CSLFLDQALAYLLMSASSAAA). The Extracellular segment spans residues 414–431 (SRNDLWVSRFGTDAFNRK). Residues 432–452 (ITSALWLSFIAFLMLALNALI) form a helical membrane-spanning segment. Topologically, residues 453 to 461 (STANLFSML) are cytoplasmic.

It belongs to the Casparian strip membrane proteins (CASP) family. As to quaternary structure, homodimer and heterodimers.

Its subcellular location is the cell membrane. In Sorghum bicolor (Sorghum), this protein is CASP-like protein 4U1.